We begin with the raw amino-acid sequence, 299 residues long: Protein bem46 (299 aa).

The chain crosses the membrane as a helical span at residues 15–32 (YSGMASLAVTLIALGFLY).

It belongs to the serine esterase family.

It is found in the membrane. Its function is as follows. Suppressor of bem1/bud5. This Schizosaccharomyces pombe (strain 972 / ATCC 24843) (Fission yeast) protein is Protein bem46 (bem46).